The chain runs to 478 residues: Glutamyl-tRNA(Gln) amidotransferase subunit A (478 aa).

Active-site charge relay system residues include Lys68 and Ser143. Catalysis depends on Ser167, which acts as the Acyl-ester intermediate.

This sequence belongs to the amidase family. GatA subfamily. In terms of assembly, heterotrimer of A, B and C subunits.

It carries out the reaction L-glutamyl-tRNA(Gln) + L-glutamine + ATP + H2O = L-glutaminyl-tRNA(Gln) + L-glutamate + ADP + phosphate + H(+). Its function is as follows. Allows the formation of correctly charged Gln-tRNA(Gln) through the transamidation of misacylated Glu-tRNA(Gln) in organisms which lack glutaminyl-tRNA synthetase. The reaction takes place in the presence of glutamine and ATP through an activated gamma-phospho-Glu-tRNA(Gln). The chain is Glutamyl-tRNA(Gln) amidotransferase subunit A (gatA) from Mycoplasma pneumoniae (strain ATCC 29342 / M129 / Subtype 1) (Mycoplasmoides pneumoniae).